The primary structure comprises 163 residues: 6,7-dimethyl-8-ribityllumazine synthase (163 aa).

5-amino-6-(D-ribitylamino)uracil is bound by residues phenylalanine 22, 56 to 58 (TFE), and 80 to 82 (AVI). (2S)-2-hydroxy-3-oxobutyl phosphate is bound at residue 85–86 (GT). The Proton donor role is filled by histidine 88. Methionine 113 provides a ligand contact to 5-amino-6-(D-ribitylamino)uracil. Arginine 127 contributes to the (2S)-2-hydroxy-3-oxobutyl phosphate binding site.

Belongs to the DMRL synthase family.

It catalyses the reaction (2S)-2-hydroxy-3-oxobutyl phosphate + 5-amino-6-(D-ribitylamino)uracil = 6,7-dimethyl-8-(1-D-ribityl)lumazine + phosphate + 2 H2O + H(+). Its pathway is cofactor biosynthesis; riboflavin biosynthesis; riboflavin from 2-hydroxy-3-oxobutyl phosphate and 5-amino-6-(D-ribitylamino)uracil: step 1/2. In terms of biological role, catalyzes the formation of 6,7-dimethyl-8-ribityllumazine by condensation of 5-amino-6-(D-ribitylamino)uracil with 3,4-dihydroxy-2-butanone 4-phosphate. This is the penultimate step in the biosynthesis of riboflavin. This chain is 6,7-dimethyl-8-ribityllumazine synthase, found in Anaeromyxobacter sp. (strain Fw109-5).